A 58-amino-acid chain; its full sequence is Temporin-1Th (58 aa).

A signal peptide spans 1–22 (MFTLKKSLLLLFFLGTINLSLC). Residues 23–46 (EEERNAEEERRDEPDERDVQVEKR) constitute a propeptide that is removed on maturation. Residues 25–46 (ERNAEEERRDEPDERDVQVEKR) are disordered. Residue Leu56 is modified to Leucine amide.

As to expression, expressed by the skin glands.

It localises to the secreted. Functionally, antimicrobial peptide that renders both the outer and inner membrane of bacteria permeable to hydrophobic substances of low molecular mass. This is Temporin-1Th from Rana temporaria (European common frog).